The sequence spans 227 residues: MIHHIPNVLSKEQVAEFRKLMEEANWVGGKVTAGTLSASVKRNQQLSEQDPLTHHLSDIVIKAIWQNPLFQAAALPHKIIPPLFNRYDEHESFGFHVDNSIRLIRGTAEQIRTDLSCTLFLSEPDEYEGGDLVIEDTYGYHEVKLPAGDVVLYPSTSLHEVSSITAGTRFASFFWVQSLVRDDSKRHLLFSLDESIRELRKSHGDSYSEVMKLTNIYHNLIRMWSEL.

One can recognise a Fe2OG dioxygenase domain in the interval Lys-78–Ser-178. Fe cation-binding residues include His-96, Asp-98, and His-159. Arg-169 lines the 2-oxoglutarate pocket.

Requires Fe(2+) as cofactor. L-ascorbate serves as cofactor.

The sequence is that of PKHD-type hydroxylase ABSDF3031 from Acinetobacter baumannii (strain SDF).